The sequence spans 361 residues: Chorismate synthase (361 aa).

Arginine 48 and arginine 54 together coordinate NADP(+). Residues 125 to 127 (RSS), 238 to 239 (NA), glycine 278, 293 to 297 (KPTSS), and arginine 319 each bind FMN.

The protein belongs to the chorismate synthase family. As to quaternary structure, homotetramer. The cofactor is FMNH2.

The enzyme catalyses 5-O-(1-carboxyvinyl)-3-phosphoshikimate = chorismate + phosphate. It participates in metabolic intermediate biosynthesis; chorismate biosynthesis; chorismate from D-erythrose 4-phosphate and phosphoenolpyruvate: step 7/7. Catalyzes the anti-1,4-elimination of the C-3 phosphate and the C-6 proR hydrogen from 5-enolpyruvylshikimate-3-phosphate (EPSP) to yield chorismate, which is the branch point compound that serves as the starting substrate for the three terminal pathways of aromatic amino acid biosynthesis. This reaction introduces a second double bond into the aromatic ring system. The polypeptide is Chorismate synthase (Salmonella dublin (strain CT_02021853)).